A 204-amino-acid chain; its full sequence is Crossover junction endodeoxyribonuclease RuvC (204 aa).

Catalysis depends on residues Asp7, Glu68, and Asp141. The Mg(2+) site is built by Asp7, Glu68, and Asp141.

Belongs to the RuvC family. As to quaternary structure, homodimer which binds Holliday junction (HJ) DNA. The HJ becomes 2-fold symmetrical on binding to RuvC with unstacked arms; it has a different conformation from HJ DNA in complex with RuvA. In the full resolvosome a probable DNA-RuvA(4)-RuvB(12)-RuvC(2) complex forms which resolves the HJ. Requires Mg(2+) as cofactor.

It localises to the cytoplasm. It carries out the reaction Endonucleolytic cleavage at a junction such as a reciprocal single-stranded crossover between two homologous DNA duplexes (Holliday junction).. The RuvA-RuvB-RuvC complex processes Holliday junction (HJ) DNA during genetic recombination and DNA repair. Endonuclease that resolves HJ intermediates. Cleaves cruciform DNA by making single-stranded nicks across the HJ at symmetrical positions within the homologous arms, yielding a 5'-phosphate and a 3'-hydroxyl group; requires a central core of homology in the junction. The consensus cleavage sequence is 5'-(A/T)TT(C/G)-3'. Cleavage occurs on the 3'-side of the TT dinucleotide at the point of strand exchange. HJ branch migration catalyzed by RuvA-RuvB allows RuvC to scan DNA until it finds its consensus sequence, where it cleaves and resolves the cruciform DNA. This Clavibacter sepedonicus (Clavibacter michiganensis subsp. sepedonicus) protein is Crossover junction endodeoxyribonuclease RuvC.